A 664-amino-acid polypeptide reads, in one-letter code: Alpha-1,4-glucan:maltose-1-phosphate maltosyltransferase (664 aa).

Positions 261, 321, and 356 each coordinate alpha-maltose 1-phosphate. Asp-393 (nucleophile) is an active-site residue. Residue Asn-394 coordinates alpha-maltose 1-phosphate. The active-site Proton donor is the Glu-422. Alpha-maltose 1-phosphate is bound at residue 533-534; that stretch reads KY.

The protein belongs to the glycosyl hydrolase 13 family. GlgE subfamily. As to quaternary structure, homodimer.

It catalyses the reaction alpha-maltose 1-phosphate + [(1-&gt;4)-alpha-D-glucosyl](n) = [(1-&gt;4)-alpha-D-glucosyl](n+2) + phosphate. Maltosyltransferase that uses maltose 1-phosphate (M1P) as the sugar donor to elongate linear or branched alpha-(1-&gt;4)-glucans. Is involved in a branched alpha-glucan biosynthetic pathway from trehalose, together with TreS, Mak and GlgB. This chain is Alpha-1,4-glucan:maltose-1-phosphate maltosyltransferase, found in Pseudomonas aeruginosa (strain ATCC 15692 / DSM 22644 / CIP 104116 / JCM 14847 / LMG 12228 / 1C / PRS 101 / PAO1).